Consider the following 367-residue polypeptide: Glutamate 5-kinase (367 aa).

Lys10 contacts ATP. The substrate site is built by Ser50, Asp137, and Asn149. Residues 169 to 170 (TD) and 211 to 217 (TGGMATK) contribute to the ATP site. The region spanning 275–353 (AGEITVDDGA…QQISEILGYE (79 aa)) is the PUA domain.

This sequence belongs to the glutamate 5-kinase family.

The protein resides in the cytoplasm. The catalysed reaction is L-glutamate + ATP = L-glutamyl 5-phosphate + ADP. It functions in the pathway amino-acid biosynthesis; L-proline biosynthesis; L-glutamate 5-semialdehyde from L-glutamate: step 1/2. Functionally, catalyzes the transfer of a phosphate group to glutamate to form L-glutamate 5-phosphate. This is Glutamate 5-kinase from Yersinia enterocolitica serotype O:8 / biotype 1B (strain NCTC 13174 / 8081).